Here is a 208-residue protein sequence, read N- to C-terminus: Uracil phosphoribosyltransferase (208 aa).

5-phospho-alpha-D-ribose 1-diphosphate is bound by residues Arg-78, Arg-103, and 130–138; that span reads DPMLATGGS. Residues Ile-193 and 198 to 200 contribute to the uracil site; that span reads GDA. A 5-phospho-alpha-D-ribose 1-diphosphate-binding site is contributed by Asp-199.

The protein belongs to the UPRTase family. Mg(2+) serves as cofactor.

It carries out the reaction UMP + diphosphate = 5-phospho-alpha-D-ribose 1-diphosphate + uracil. It functions in the pathway pyrimidine metabolism; UMP biosynthesis via salvage pathway; UMP from uracil: step 1/1. Its activity is regulated as follows. Allosterically activated by GTP. Catalyzes the conversion of uracil and 5-phospho-alpha-D-ribose 1-diphosphate (PRPP) to UMP and diphosphate. In Thermus thermophilus (strain ATCC 27634 / DSM 579 / HB8), this protein is Uracil phosphoribosyltransferase.